The primary structure comprises 239 residues: uncharacterized protein (239 aa).

Belongs to the initiator RepB protein family.

Its function is as follows. Mutations in ORF 239 affects the incN plasmid pUC1 E.coli polA-independence but not its autonomous replication ability. This is an uncharacterized protein from Escherichia coli.